The following is a 957-amino-acid chain: Glycine dehydrogenase (decarboxylating) (957 aa).

At K708 the chain carries N6-(pyridoxal phosphate)lysine.

This sequence belongs to the GcvP family. As to quaternary structure, the glycine cleavage system is composed of four proteins: P, T, L and H. It depends on pyridoxal 5'-phosphate as a cofactor.

It carries out the reaction N(6)-[(R)-lipoyl]-L-lysyl-[glycine-cleavage complex H protein] + glycine + H(+) = N(6)-[(R)-S(8)-aminomethyldihydrolipoyl]-L-lysyl-[glycine-cleavage complex H protein] + CO2. The glycine cleavage system catalyzes the degradation of glycine. The P protein binds the alpha-amino group of glycine through its pyridoxal phosphate cofactor; CO(2) is released and the remaining methylamine moiety is then transferred to the lipoamide cofactor of the H protein. The sequence is that of Glycine dehydrogenase (decarboxylating) from Salmonella typhi.